We begin with the raw amino-acid sequence, 202 residues long: Keratin-associated protein 5-10 (202 aa).

7 consecutive repeat copies span residues C48–P51, C54–P57, C144–P147, C162–P165, C172–P175, C182–P185, and C192–P195. The interval C48–P195 is 7 X 4 AA repeats of C-C-X-P.

This sequence belongs to the KRTAP type 5 family. As to quaternary structure, interacts with hair keratins. As to expression, expressed in hair root but not in skin. Expressed also in brain and skeletal muscle.

In the hair cortex, hair keratin intermediate filaments are embedded in an interfilamentous matrix, consisting of hair keratin-associated protein (KRTAP), which are essential for the formation of a rigid and resistant hair shaft through their extensive disulfide bond cross-linking with abundant cysteine residues of hair keratins. The matrix proteins include the high-sulfur and high-glycine-tyrosine keratins. The protein is Keratin-associated protein 5-10 (KRTAP5-10) of Homo sapiens (Human).